The following is a 239-amino-acid chain: Bidirectional sugar transporter SWEET8 (239 aa).

Residues 1–6 (MVDAKQ) lie on the Extracellular side of the membrane. A helical membrane pass occupies residues 7 to 27 (VRFIIGVIGNVISFGLFAAPA). The MtN3/slv 1 domain maps to 9 to 98 (FIIGVIGNVI…VYLMYCGHKK (90 aa)). At 28 to 44 (KTFWRIFKKKSVEEFSY) the chain is on the cytoplasmic side. The helical transmembrane segment at 45–65 (VPYVATVMNCMLWVFYGLPVV) threads the bilayer. Over 66-69 (HKDS) the chain is Extracellular. A helical membrane pass occupies residues 70–90 (ILVSTINGVGLVIELFYVGVY). The Cytoplasmic portion of the chain corresponds to 91-103 (LMYCGHKKNHRRN). Residues 104-124 (ILGFLALEVILVVAIILITLF) traverse the membrane as a helical segment. Residues 125 to 135 (ALKGDFVKQTF) lie on the Extracellular side of the membrane. The region spanning 134 to 185 (TFVGVICDVFNIAMYGAPSLAIIKVVKTKSVEYMPFLLSLVCFVNAGIWTTY) is the MtN3/slv 2 domain. The chain crosses the membrane as a helical span at residues 136-156 (VGVICDVFNIAMYGAPSLAII). The Cytoplasmic segment spans residues 157–168 (KVVKTKSVEYMP). The chain crosses the membrane as a helical span at residues 169–189 (FLLSLVCFVNAGIWTTYSLIF). Topologically, residues 190–194 (KIDYY) are extracellular. A helical membrane pass occupies residues 195–215 (VLASNGIGTFLALSQLIVYFM). The Cytoplasmic segment spans residues 216-239 (YYKSTPKEKTVKPSEVEISATERV).

It belongs to the SWEET sugar transporter family. As to quaternary structure, forms homooligomers and heterooligomers with SWEET4, SWEET5, SWEET6, SWEET7, SWEET9, SWEET10, SWEET11, SWEET13, SWEET15, SWEET16 and SWEET17. In terms of tissue distribution, expressed in inflorescences, embryo sacs and pollen, and at a lower level in stems. Barely detected in roots, leaves and seedlings.

The protein resides in the cell membrane. Functionally, mediates both low-affinity uptake and efflux of sugar across the plasma membrane. Required, in pollen, for microspore cell integrity and primexine pattern formation. This chain is Bidirectional sugar transporter SWEET8, found in Arabidopsis thaliana (Mouse-ear cress).